We begin with the raw amino-acid sequence, 255 residues long: Indole-3-glycerol phosphate synthase (255 aa).

It belongs to the TrpC family.

It carries out the reaction 1-(2-carboxyphenylamino)-1-deoxy-D-ribulose 5-phosphate + H(+) = (1S,2R)-1-C-(indol-3-yl)glycerol 3-phosphate + CO2 + H2O. Its pathway is amino-acid biosynthesis; L-tryptophan biosynthesis; L-tryptophan from chorismate: step 4/5. This Streptococcus pneumoniae serotype 2 (strain D39 / NCTC 7466) protein is Indole-3-glycerol phosphate synthase.